The following is a 231-amino-acid chain: 2-C-methyl-D-erythritol 4-phosphate cytidylyltransferase (231 aa).

This sequence belongs to the IspD/TarI cytidylyltransferase family. IspD subfamily.

It carries out the reaction 2-C-methyl-D-erythritol 4-phosphate + CTP + H(+) = 4-CDP-2-C-methyl-D-erythritol + diphosphate. Its pathway is isoprenoid biosynthesis; isopentenyl diphosphate biosynthesis via DXP pathway; isopentenyl diphosphate from 1-deoxy-D-xylulose 5-phosphate: step 2/6. Catalyzes the formation of 4-diphosphocytidyl-2-C-methyl-D-erythritol from CTP and 2-C-methyl-D-erythritol 4-phosphate (MEP). This Mycobacterium bovis (strain BCG / Pasteur 1173P2) protein is 2-C-methyl-D-erythritol 4-phosphate cytidylyltransferase.